The primary structure comprises 341 residues: Glucokinase (341 aa).

18–23 serves as a coordination point for ATP; that stretch reads GDIGGT.

It belongs to the bacterial glucokinase family.

It localises to the cytoplasm. The enzyme catalyses D-glucose + ATP = D-glucose 6-phosphate + ADP + H(+). This is Glucokinase from Rhizobium johnstonii (strain DSM 114642 / LMG 32736 / 3841) (Rhizobium leguminosarum bv. viciae).